A 165-amino-acid chain; its full sequence is 6,7-dimethyl-8-ribityllumazine synthase (165 aa).

5-amino-6-(D-ribitylamino)uracil-binding positions include tryptophan 26, 58–60 (SIE), and 80–82 (VVI). A (2S)-2-hydroxy-3-oxobutyl phosphate-binding site is contributed by 85-86 (GT). Histidine 88 (proton donor) is an active-site residue. Residue asparagine 113 coordinates 5-amino-6-(D-ribitylamino)uracil. Arginine 127 contributes to the (2S)-2-hydroxy-3-oxobutyl phosphate binding site.

This sequence belongs to the DMRL synthase family.

The enzyme catalyses (2S)-2-hydroxy-3-oxobutyl phosphate + 5-amino-6-(D-ribitylamino)uracil = 6,7-dimethyl-8-(1-D-ribityl)lumazine + phosphate + 2 H2O + H(+). Its pathway is cofactor biosynthesis; riboflavin biosynthesis; riboflavin from 2-hydroxy-3-oxobutyl phosphate and 5-amino-6-(D-ribitylamino)uracil: step 1/2. Catalyzes the formation of 6,7-dimethyl-8-ribityllumazine by condensation of 5-amino-6-(D-ribitylamino)uracil with 3,4-dihydroxy-2-butanone 4-phosphate. This is the penultimate step in the biosynthesis of riboflavin. This is 6,7-dimethyl-8-ribityllumazine synthase from Saccharopolyspora erythraea (strain ATCC 11635 / DSM 40517 / JCM 4748 / NBRC 13426 / NCIMB 8594 / NRRL 2338).